Reading from the N-terminus, the 143-residue chain is Large ribosomal subunit protein uL15 (143 aa).

The tract at residues 1–51 (MELNGIKPAAGAKHAKRRVGRGIGSGIGKTAGRGHKGQKSRAGGFHKVGFE) is disordered. Gly residues predominate over residues 21–31 (RGIGSGIGKTA).

The protein belongs to the universal ribosomal protein uL15 family. As to quaternary structure, part of the 50S ribosomal subunit.

In terms of biological role, binds to the 23S rRNA. This is Large ribosomal subunit protein uL15 from Variovorax paradoxus (strain S110).